The chain runs to 464 residues: Calcitonin gene-related peptide type 1 receptor (464 aa).

An N-terminal signal peptide occupies residues Met-1–Ala-23. The Extracellular portion of the chain corresponds to Glu-24–Leu-139. N-linked (GlcNAc...) asparagine glycosylation is found at Asn-30, Asn-66, Asn-118, Asn-123, Asn-128, and Asn-129. 3 cysteine pairs are disulfide-bonded: Cys-48–Cys-74, Cys-65–Cys-105, and Cys-88–Cys-127. The chain crosses the membrane as a helical span at residues Asn-140 to Phe-164. The Cytoplasmic portion of the chain corresponds to Tyr-165–Thr-175. The chain crosses the membrane as a helical span at residues Leu-176 to Val-198. Residues Ala-199–Pro-209 lie on the Extracellular side of the membrane. A helical membrane pass occupies residues Val-210–His-238. The Cytoplasmic segment spans residues Thr-239 to Leu-252. The helical transmembrane segment at Met-253–Ala-273 threads the bilayer. Residues Arg-274–His-289 are Extracellular-facing. Positions Thr-288–His-289 are required for RAMP3 interaction. The chain crosses the membrane as a helical span at residues Leu-290–Arg-314. At Val-315–Asn-329 the chain is on the cytoplasmic side. Residues Leu-330–Leu-351 form a helical membrane-spanning segment. At Phe-352 to Asp-366 the chain is on the extracellular side. A helical membrane pass occupies residues Tyr-367–Phe-387. Residues Asn-388–Met-464 lie on the Cytoplasmic side of the membrane. Ser-420 and Ser-445 each carry phosphoserine.

The protein belongs to the G-protein coupled receptor 2 family. In terms of assembly, heterodimer of CALCRL and RAMP1; the receptor complex functions as CGRP receptor. Heterodimer of CALCRL and RAMP2 or CALCRL and RAMP3; the complexes function as adrenomedullin receptor.

The protein resides in the cell membrane. In terms of biological role, g protein-coupled receptor which specificity is determined by its interaction with receptor-activity-modifying proteins (RAMPs). Together with RAMP1, form the receptor complex for calcitonin-gene-related peptides CALCA/CGRP1 and CALCB/CGRP2. Together with RAMP2 or RAMP3, function as receptor complexes for adrenomedullin (ADM and ADM2). Ligand binding causes a conformation change that triggers signaling via guanine nucleotide-binding proteins (G proteins) and modulates the activity of downstream effectors. Activates cAMP-dependent pathway. This is Calcitonin gene-related peptide type 1 receptor from Rattus norvegicus (Rat).